An 831-amino-acid polypeptide reads, in one-letter code: uncharacterized protein (831 aa).

The 146-residue stretch at 1 to 146 folds into the CID domain; that stretch reads MDIFDSTITS…RAFSILSGVA (146 aa). 4 disordered regions span residues 205 to 233, 265 to 354, 434 to 480, and 572 to 831; these read SSSS…SSIS, KEHF…NYNN, IGNS…NEDS, and CGAD…SNRH. 2 stretches are compositionally biased toward low complexity: residues 272 to 354 and 434 to 477; these read NDTS…NYNN and IGNS…NNNN. Composition is skewed to basic and acidic residues over residues 592–601 and 611–813; these read NENKQNDSHR and SRGE…RSKE. Over residues 817–831 the composition is skewed to low complexity; it reads NNDNRSSSNRSSNRH.

This is an uncharacterized protein from Dictyostelium discoideum (Social amoeba).